We begin with the raw amino-acid sequence, 432 residues long: MKTKILFFLFFSTFSFSIFAAPITIAIDPGHGGKDPGAISRNLGIYEKNVTLSIAKELKALLDKDPHFRGVLTRKSDYYISVPERSEIARKFKANYLISIHADSSKSPDRRGASVWVLSNRRANDEMGQWLEDDEKRSELLGGAGKVLSHNNDKYLDQTVLDLQFGHSQRTGYVLGEHILHHFAKVTTLSRSTPQHASLGVLRSPDIPSVLVETGFLSNSEEEKKLNSQTYRRRIAYMIYEGLVAFHSGKTNTLVKDNLVQNIKQNDIKKSGKNNRTSEQNINEDNIKDSGIRHIVKKGESLGSLSNKYHVKVSDIIKLNQLKRKTLWLNESIKIPDNVEIKNKSLTIKENDFHKKQNSLVNNTNKDLKKEKNTQTNNQKNIIPLYHKVTKNQTLYAISREYNIPVNILLSLNPHLKNGKVITGQKIKLREK.

The signal sequence occupies residues 1 to 20 (MKTKILFFLFFSTFSFSIFA). Residues 25–244 (IAIDPGHGGK…IAYMIYEGLV (220 aa)) enclose the MurNAc-LAA domain. LysM domains follow at residues 292–335 (IRHI…SIKI) and 385–429 (LYHK…KIKL).

This sequence belongs to the N-acetylmuramoyl-L-alanine amidase 3 family.

Its subcellular location is the periplasm. It catalyses the reaction Hydrolyzes the link between N-acetylmuramoyl residues and L-amino acid residues in certain cell-wall glycopeptides.. In terms of biological role, cell-wall hydrolase involved in septum cleavage during cell division. The sequence is that of Probable N-acetylmuramoyl-L-alanine amidase AmiB (amiB) from Haemophilus influenzae (strain ATCC 51907 / DSM 11121 / KW20 / Rd).